Reading from the N-terminus, the 521-residue chain is DNA damage-binding protein cmr1 (521 aa).

The segment at 36–75 is disordered; it reads DKIIPKPAPPKPKRASTPRVKREPVKKEAARPTRQSSRLA. Over residues 55–66 the composition is skewed to basic and acidic residues; the sequence is VKREPVKKEAAR. WD repeat units lie at residues 183–224, 242–282, 333–373, 382–422, and 490–521; these read IVPQ…PKIE, THSR…STEI, LTDH…GKGD, EHES…EWKA, and DGIT…CLWM.

It belongs to the WD repeat DDB2/WDR76 family.

In terms of biological role, DNA-binding protein that binds to both single- and double-stranded DNA. Binds preferentially to UV-damaged DNA. May be involved in DNA-metabolic processes. This is DNA damage-binding protein cmr1 from Neurospora crassa (strain ATCC 24698 / 74-OR23-1A / CBS 708.71 / DSM 1257 / FGSC 987).